We begin with the raw amino-acid sequence, 115 residues long: NADH-ubiquinone oxidoreductase chain 3 (115 aa).

Helical transmembrane passes span Val-3–Trp-23, Phe-55–Leu-75, and Leu-84–Tyr-104.

It belongs to the complex I subunit 3 family. As to quaternary structure, core subunit of respiratory chain NADH dehydrogenase (Complex I) which is composed of 45 different subunits. Interacts with TMEM186. Interacts with TMEM242.

The protein resides in the mitochondrion inner membrane. It catalyses the reaction a ubiquinone + NADH + 5 H(+)(in) = a ubiquinol + NAD(+) + 4 H(+)(out). Its function is as follows. Core subunit of the mitochondrial membrane respiratory chain NADH dehydrogenase (Complex I) which catalyzes electron transfer from NADH through the respiratory chain, using ubiquinone as an electron acceptor. Essential for the catalytic activity of complex I. This Canis lupus familiaris (Dog) protein is NADH-ubiquinone oxidoreductase chain 3.